Reading from the N-terminus, the 589-residue chain is Sentrin-specific protease 2 (589 aa).

The Nuclear localization signal signature appears at 28 to 31 (KRRR). Ser-32 is modified (phosphoserine). A Nuclear localization signal motif is present at residues 46-51 (PAKRPR). Residues 155–176 (SEGCNRRPGGRRHSKGNPESSL) form a disordered region. The Nuclear export signal signature appears at 317–332 (LEPDLSEEVSARLRLG). Phosphoserine is present on residues Ser-333 and Ser-344. Residues 396-560 (RITRGDIQTL…FTCKYADYIS (165 aa)) are protease. Active-site residues include His-478 and Asp-495. The Nucleophile role is filled by Cys-548.

Belongs to the peptidase C48 family. As to quaternary structure, binds to SUMO2 and SUMO3. Interacts with the C-terminal domain of NUP153 via its N-terminus. Interacts with MTA1. In terms of processing, polyubiquitinated; which leads to proteasomal degradation.

It is found in the nucleus. It localises to the nuclear pore complex. Its subcellular location is the nucleus membrane. The protein resides in the cytoplasm. Its function is as follows. Protease that catalyzes two essential functions in the SUMO pathway. The first is the hydrolysis of an alpha-linked peptide bond at the C-terminal end of the small ubiquitin-like modifier (SUMO) propeptides, SUMO1, SUMO2 and SUMO3 leading to the mature form of the proteins. The second is the deconjugation of SUMO1, SUMO2 and SUMO3 from targeted proteins, by cleaving an epsilon-linked peptide bond between the C-terminal glycine of the mature SUMO and the lysine epsilon-amino group of the target protein. May down-regulate CTNNB1 levels and thereby modulate the Wnt pathway. Deconjugates SUMO2 from MTA1. Plays a dynamic role in adipogenesis by desumoylating and promoting the stabilization of CEBPB. Acts as a regulator of the cGAS-STING pathway by catalyzing desumoylation of CGAS and STING1 during the late phase of viral infection. This is Sentrin-specific protease 2 from Homo sapiens (Human).